Consider the following 289-residue polypeptide: GTPase Era (289 aa).

The Era-type G domain occupies 2–167 (KSGFVSIIGR…LDEICKLLPE (166 aa)). The segment at 10–17 (GRTNAGKS) is G1. 10–17 (GRTNAGKS) lines the GTP pocket. The tract at residues 36-40 (NATRR) is G2. The interval 57–60 (DTPG) is G3. Residues 57 to 61 (DTPGL) and 116 to 119 (TKVD) each bind GTP. The interval 116–119 (TKVD) is G4. The interval 146 to 148 (FST) is G5. Positions 194–274 (IYENLSDEIP…FLKLDVVVKK (81 aa)) constitute a KH type-2 domain.

Belongs to the TRAFAC class TrmE-Era-EngA-EngB-Septin-like GTPase superfamily. Era GTPase family. In terms of assembly, monomer.

It is found in the cytoplasm. Its subcellular location is the cell inner membrane. Its function is as follows. An essential GTPase that binds both GDP and GTP, with rapid nucleotide exchange. Plays a role in 16S rRNA processing and 30S ribosomal subunit biogenesis and possibly also in cell cycle regulation and energy metabolism. The chain is GTPase Era from Campylobacter concisus (strain 13826).